The primary structure comprises 127 residues: Major sperm protein 2 (127 aa).

Position 2 is an N-acetylalanine (Ala-2). Positions 9 to 126 (DIHTQPGSKI…RRKNLPIEYN (118 aa)) constitute an MSP domain.

As to expression, sperm.

It localises to the cell projection. The protein resides in the pseudopodium. Its subcellular location is the cytoplasm. The protein localises to the cytoskeleton. Central component in molecular interactions underlying sperm crawling. Forms an extensive filament system that extends from sperm villipoda, along the leading edge of the pseudopod. The polypeptide is Major sperm protein 2 (Onchocerca volvulus).